The sequence spans 204 residues: Shikimate kinase (204 aa).

35–40 (ASGKST) is an ATP binding site. Ser39 serves as a coordination point for Mg(2+). Substrate contacts are provided by Asp57, Arg81, and Gly103. Arg142 provides a ligand contact to ATP. Residue Arg169 coordinates substrate.

Belongs to the shikimate kinase family. In terms of assembly, monomer. Mg(2+) serves as cofactor.

The protein localises to the cytoplasm. The catalysed reaction is shikimate + ATP = 3-phosphoshikimate + ADP + H(+). The protein operates within metabolic intermediate biosynthesis; chorismate biosynthesis; chorismate from D-erythrose 4-phosphate and phosphoenolpyruvate: step 5/7. Functionally, catalyzes the specific phosphorylation of the 3-hydroxyl group of shikimic acid using ATP as a cosubstrate. The polypeptide is Shikimate kinase (Salinibacter ruber (strain DSM 13855 / M31)).